The chain runs to 524 residues: Excitatory amino acid transporter 3 (524 aa).

Residues 1–18 lie on the Cytoplasmic side of the membrane; sequence MGKPARKGCDWKRFLRNN. A helical membrane pass occupies residues 19 to 38; the sequence is WLLLSTVVAVVLGIVIGVLV. Residues 39–61 lie on the Extracellular side of the membrane; it reads REYSKLSNLEKFYFSFPGEILMR. A helical transmembrane segment spans residues 62 to 82; the sequence is MLKLVILPLIVSSMITGVATL. Residues 83–93 lie on the Cytoplasmic side of the membrane; sequence DSNVSGKIGLR. A helical transmembrane segment spans residues 94–114; the sequence is AVVYYFCTTLIAVILGIVLVV. Positions 98, 101, and 102 each coordinate Na(+). Residues 115-205 lie on the Extracellular side of the membrane; the sequence is SIKPGVTQKV…KTKEYKVVGM (91 aa). N178 and N195 each carry an N-linked (GlcNAc...) asparagine glycan. A helical transmembrane segment spans residues 206–229; that stretch reads YSDGINVLGLIVFCLVLGIVIGRK. The Cytoplasmic portion of the chain corresponds to 230–238; it reads WEKGQILVD. A helical membrane pass occupies residues 239–266; sequence FFNALSDATMKIVQIIMCYMPIGILFLI. Residues 267–286 lie on the Extracellular side of the membrane; the sequence is AGKIIEVEDWEIFRKLGLYM. Residues 287–308 traverse the membrane as a helical segment; that stretch reads ATVLSGLAIHSIVILPLIYFII. Over 309–313 the chain is Cytoplasmic; it reads VRKNP. The discontinuously helical intramembrane region spans 314 to 344; it reads FQFAMGMAQALLTALMISSSSATLPVTFRCA. Positions 331 and 333 each coordinate L-aspartate. The Cytoplasmic segment spans residues 345–353; sequence EEKNRVDKR. A helical transmembrane segment spans residues 354-380; that stretch reads ITRFVLPVGATINMDGTALYEAVAAVF. Residues G362, T364, N366, and D368 each coordinate Na(+). T370 lines the L-aspartate pocket. Residues 381 to 393 lie on the Extracellular side of the membrane; that stretch reads IAQLNDLDLSVGQ. An intramembrane region (discontinuously helical) is located at residues 394 to 427; that stretch reads IITISVTATAASIGAAGVPQPGLVTMVIVLSAVG. Na(+) contacts are provided by S405, I406, and A408. An L-aspartate-binding site is contributed by V411. Residues 428 to 440 are Extracellular-facing; sequence LPAEDVTLIIAVD. The chain crosses the membrane as a helical span at residues 441-462; the sequence is WLLDRFRTMVNVLGDAFGTGIV. L-aspartate-binding residues include R447, T448, and N451. N451 and D455 together coordinate Na(+). Topologically, residues 463–524 are cytoplasmic; sequence EKLSKKELEQ…TISFTQTSQF (62 aa). S517 and S522 each carry phosphoserine.

It belongs to the dicarboxylate/amino acid:cation symporter (DAACS) (TC 2.A.23) family. SLC1A1 subfamily. Homotrimer. Interacts with ARL6IP5. Interacts with RTN2 (via N-terminus); the interaction promotes cell surface expression of SLC1A1. Interacts with SORCS2; this interaction is important for normal expression at the cell membrane.

Its subcellular location is the cell membrane. It is found in the apical cell membrane. The protein localises to the synapse. It localises to the synaptosome. The protein resides in the early endosome membrane. Its subcellular location is the late endosome membrane. It is found in the recycling endosome membrane. It carries out the reaction K(+)(in) + L-glutamate(out) + 3 Na(+)(out) + H(+)(out) = K(+)(out) + L-glutamate(in) + 3 Na(+)(in) + H(+)(in). It catalyses the reaction K(+)(in) + L-aspartate(out) + 3 Na(+)(out) + H(+)(out) = K(+)(out) + L-aspartate(in) + 3 Na(+)(in) + H(+)(in). The catalysed reaction is D-aspartate(out) + K(+)(in) + 3 Na(+)(out) + H(+)(out) = D-aspartate(in) + K(+)(out) + 3 Na(+)(in) + H(+)(in). The enzyme catalyses K(+)(in) + L-cysteine(out) + 3 Na(+)(out) + H(+)(out) = K(+)(out) + L-cysteine(in) + 3 Na(+)(in) + H(+)(in). Sodium-dependent, high-affinity amino acid transporter that mediates the uptake of L-glutamate and also L-aspartate and D-aspartate. Can also transport L-cysteine. Functions as a symporter that transports one amino acid molecule together with two or three Na(+) ions and one proton, in parallel with the counter-transport of one K(+) ion. Mediates Cl(-) flux that is not coupled to amino acid transport; this avoids the accumulation of negative charges due to aspartate and Na(+) symport. Plays an important role in L-glutamate and L-aspartate reabsorption in renal tubuli. Plays a redundant role in the rapid removal of released glutamate from the synaptic cleft, which is essential for terminating the postsynaptic action of glutamate. Contributes to glutathione biosynthesis and protection against oxidative stress via its role in L-glutamate and L-cysteine transport. Negatively regulated by ARL6IP5. This is Excitatory amino acid transporter 3 (SLC1A1) from Bos taurus (Bovine).